A 137-amino-acid polypeptide reads, in one-letter code: MLVPKRVKHRREFRGKMRGEAKGGKEVSFGEYGLQATTSHWITNRQIEAARIAMTRYMKRGGKVWIKIFPHKSYTAKAIGVRMGSGKGAPEGWVAPVKRGKVMFEIAGVSEEVAREALRLASHKLPVKCKFVKREAE.

This sequence belongs to the universal ribosomal protein uL16 family. Part of the 50S ribosomal subunit.

In terms of biological role, binds 23S rRNA and is also seen to make contacts with the A and possibly P site tRNAs. The protein is Large ribosomal subunit protein uL16 of Streptococcus agalactiae serotype Ia (strain ATCC 27591 / A909 / CDC SS700).